A 209-amino-acid chain; its full sequence is Peroxiredoxin (209 aa).

Residues 2–156 (PLIGDKFPEM…IVRMIRAFRV (155 aa)) form the Thioredoxin domain. Residue C44 is the Cysteine sulfenic acid (-SOH) intermediate of the active site. R119 contributes to the substrate binding site. C198 and C204 form a disulfide bridge.

The protein belongs to the peroxiredoxin family. Prx6 subfamily. Homodecamer. Pentamer of dimers that assemble into a ring structure.

It localises to the cytoplasm. It carries out the reaction a hydroperoxide + [thioredoxin]-dithiol = an alcohol + [thioredoxin]-disulfide + H2O. Its function is as follows. Thiol-specific peroxidase that catalyzes the reduction of hydrogen peroxide and organic hydroperoxides to water and alcohols, respectively. Plays a role in cell protection against oxidative stress by detoxifying peroxides. This chain is Peroxiredoxin, found in Methanothermobacter thermautotrophicus (strain ATCC 29096 / DSM 1053 / JCM 10044 / NBRC 100330 / Delta H) (Methanobacterium thermoautotrophicum).